A 492-amino-acid polypeptide reads, in one-letter code: 3-octaprenyl-4-hydroxybenzoate carboxy-lyase (492 aa).

Position 175 (Asn175) interacts with Mn(2+). Prenylated FMN-binding positions include 178-180, 192-194, and 197-198; these read IYR, RWL, and RG. Glu241 contributes to the Mn(2+) binding site. Asp290 functions as the Proton donor in the catalytic mechanism.

Belongs to the UbiD family. As to quaternary structure, homohexamer. Requires prenylated FMN as cofactor. The cofactor is Mn(2+).

Its subcellular location is the cell membrane. It carries out the reaction a 4-hydroxy-3-(all-trans-polyprenyl)benzoate + H(+) = a 2-(all-trans-polyprenyl)phenol + CO2. Its pathway is cofactor biosynthesis; ubiquinone biosynthesis. Functionally, catalyzes the decarboxylation of 3-octaprenyl-4-hydroxy benzoate to 2-octaprenylphenol, an intermediate step in ubiquinone biosynthesis. In Salmonella typhimurium (strain LT2 / SGSC1412 / ATCC 700720), this protein is 3-octaprenyl-4-hydroxybenzoate carboxy-lyase.